The primary structure comprises 341 residues: Pyrophosphate--fructose 6-phosphate 1-phosphotransferase (341 aa).

Diphosphate is bound at residue G10. Residue E103 coordinates Mg(2+). Residues 125–127 (TID), R162, 169–171 (MGR), E221, R265, and 271–274 (HTQR) contribute to the substrate site. Catalysis depends on D127, which acts as the Proton acceptor.

The protein belongs to the phosphofructokinase type A (PFKA) family. Mixed-substrate PFK group III subfamily. As to quaternary structure, homotetramer. Requires Mg(2+) as cofactor.

It is found in the cytoplasm. It carries out the reaction beta-D-fructose 6-phosphate + diphosphate = beta-D-fructose 1,6-bisphosphate + phosphate + H(+). The protein operates within carbohydrate degradation; glycolysis; D-glyceraldehyde 3-phosphate and glycerone phosphate from D-glucose: step 3/4. With respect to regulation, non-allosteric. Its function is as follows. Catalyzes the phosphorylation of D-fructose 6-phosphate, the first committing step of glycolysis. Uses inorganic phosphate (PPi) as phosphoryl donor instead of ATP like common ATP-dependent phosphofructokinases (ATP-PFKs), which renders the reaction reversible, and can thus function both in glycolysis and gluconeogenesis. Consistently, PPi-PFK can replace the enzymes of both the forward (ATP-PFK) and reverse (fructose-bisphosphatase (FBPase)) reactions. The protein is Pyrophosphate--fructose 6-phosphate 1-phosphotransferase of Amycolatopsis methanolica.